A 595-amino-acid chain; its full sequence is MGESLNGLKRTIMCGEIRENHIGNRVVVMGWVQRKRNLGGLVFVDLRDREGILQVVFGEEINKDAFMKADLVKSEYCISVSGTLVKRESPNPNMPTGMVELKGEEIKILSESETPPIYIKENLDAAENIRLRYRYLDLRRPDMQKIFKIRHKTTKIIRDFMDEENFLEMETPILTKSTPEGARDYLVPSRNYNGKFYALPQSPQLFKQLLMVSGYDKYFQIAKCFRDEDLRANRQPEFTQVDMEMSFVEEDDVIELNERLIQKVFKEMAGVEVKLPIERMTWKTAMEKYGSDKPDLRFGMEINDISEAVSTSDFKVFKSAIEEGGSVRAIKAPNSADMPRKKIDKLGEFVKTYKAKGLAWIALKEDGIKSPIAKFLKEEELKAIIDKVQGKTGDLILIVADKNSVVFQSLGALRLEIAKELEILKDNKEFRFVWITEFPLLSYNEEEERFQAEHHPFTMPMDEDIEYLESDPGRVRAKAYDIVLNGEELGGGSVRIHDTALQERMFKVLGFTKESAWERFSFLLEAFKFGPPPHAGLAYGLDRLIMFLAGTENIKDVIAFPKNQNAFCPLTEAPNVVDENQIEELGIKVESKEEE.

Position 180 (Glu180) interacts with L-aspartate. Positions 204–207 (QLFK) are aspartate. Residue Arg226 coordinates L-aspartate. ATP is bound by residues 226–228 (RDE) and Gln235. Residue His454 coordinates L-aspartate. Glu488 provides a ligand contact to ATP. Position 495 (Arg495) interacts with L-aspartate. 540–543 (GLDR) contributes to the ATP binding site.

The protein belongs to the class-II aminoacyl-tRNA synthetase family. Type 1 subfamily. Homodimer.

It localises to the cytoplasm. The catalysed reaction is tRNA(Asp) + L-aspartate + ATP = L-aspartyl-tRNA(Asp) + AMP + diphosphate. Its function is as follows. Catalyzes the attachment of L-aspartate to tRNA(Asp) in a two-step reaction: L-aspartate is first activated by ATP to form Asp-AMP and then transferred to the acceptor end of tRNA(Asp). In Clostridium acetobutylicum (strain ATCC 824 / DSM 792 / JCM 1419 / IAM 19013 / LMG 5710 / NBRC 13948 / NRRL B-527 / VKM B-1787 / 2291 / W), this protein is Aspartate--tRNA ligase.